We begin with the raw amino-acid sequence, 68 residues long: ATP synthase F(0) complex subunit 8 (68 aa).

A helical transmembrane segment spans residues 8–21 (VWPTMITPMLLTLF). At K54 the chain carries N6-acetyllysine; alternate. K54 carries the N6-succinyllysine; alternate modification. At K57 the chain carries N6-acetyllysine.

This sequence belongs to the ATPase protein 8 family. As to quaternary structure, component of the ATP synthase complex composed at least of ATP5F1A/subunit alpha, ATP5F1B/subunit beta, ATP5MC1/subunit c (homooctomer), MT-ATP6/subunit a, MT-ATP8/subunit 8, ATP5ME/subunit e, ATP5MF/subunit f, ATP5MG/subunit g, ATP5MK/subunit k, ATP5MJ/subunit j, ATP5F1C/subunit gamma, ATP5F1D/subunit delta, ATP5F1E/subunit epsilon, ATP5PF/subunit F6, ATP5PB/subunit b, ATP5PD/subunit d, ATP5PO/subunit OSCP. ATP synthase complex consists of a soluble F(1) head domain (subunits alpha(3) and beta(3)) - the catalytic core - and a membrane F(0) domain - the membrane proton channel (subunits c, a, 8, e, f, g, k and j). These two domains are linked by a central stalk (subunits gamma, delta, and epsilon) rotating inside the F1 region and a stationary peripheral stalk (subunits F6, b, d, and OSCP). Interacts with PRICKLE3.

The protein localises to the mitochondrion membrane. Functionally, subunit 8, of the mitochondrial membrane ATP synthase complex (F(1)F(0) ATP synthase or Complex V) that produces ATP from ADP in the presence of a proton gradient across the membrane which is generated by electron transport complexes of the respiratory chain. ATP synthase complex consist of a soluble F(1) head domain - the catalytic core - and a membrane F(1) domain - the membrane proton channel. These two domains are linked by a central stalk rotating inside the F(1) region and a stationary peripheral stalk. During catalysis, ATP synthesis in the catalytic domain of F(1) is coupled via a rotary mechanism of the central stalk subunits to proton translocation. In vivo, can only synthesize ATP although its ATP hydrolase activity can be activated artificially in vitro. Part of the complex F(0) domain. This chain is ATP synthase F(0) complex subunit 8, found in Homo sapiens (Human).